Reading from the N-terminus, the 341-residue chain is Guanine nucleotide-binding protein subunit beta (341 aa).

WD repeat units lie at residues 54 to 84, 96 to 126, 142 to 171, 183 to 213, 225 to 255, 269 to 299, and 311 to 341; these read GHLA…IVWD, LRSS…SIYS, GHTG…ALWD, GHTG…KLWD, GHES…RLFD, NIIC…NVWD, and GHDN…KIWN.

The protein belongs to the WD repeat G protein beta family. G proteins are composed of 3 units, alpha, beta and gamma.

In terms of biological role, guanine nucleotide-binding proteins (G proteins) are involved as a modulator or transducer in various transmembrane signaling systems. The beta and gamma chains are required for the GTPase activity, for replacement of GDP by GTP, and for G protein-effector interaction. The polypeptide is Guanine nucleotide-binding protein subunit beta (Lymnaea stagnalis (Great pond snail)).